The chain runs to 189 residues: Cyclin-dependent kinase inhibitor 5 (189 aa).

A compositionally biased stretch (polar residues) spans 73-93; the sequence is KQQKQQLIPSVNQCQTKNPRA. The segment at 73–107 is disordered; sequence KQQKQQLIPSVNQCQTKNPRASSGPAKKLEPDTTT.

It belongs to the CDI family. ICK/KRP subfamily. Interacts with CYCD4-1. Does not interact with CDKA-1. As to expression, expressed in flowers and at lower levels in roots and leaves.

It localises to the nucleus. The protein localises to the nucleoplasm. Its function is as follows. Inhibits CYCD2-1/CDKA-1 complex kinase activity without interaction with the complex. The chain is Cyclin-dependent kinase inhibitor 5 (KRP5) from Arabidopsis thaliana (Mouse-ear cress).